The primary structure comprises 425 residues: Elongation factor 1-alpha (425 aa).

In terms of domain architecture, tr-type G spans 5 to 221 (KPHMNLAVIG…DLFKMPDMPT (217 aa)). The tract at residues 14 to 21 (GHIDHGKS) is G1. 14–21 (GHIDHGKS) contacts GTP. S21 provides a ligand contact to Mg(2+). Residues 70 to 74 (GITID) form a G2 region. A G3 region spans residues 91–94 (DCPG). GTP is bound by residues 91-95 (DCPGH) and 146-149 (NKMD). The segment at 146–149 (NKMD) is G4. Residues 185 to 187 (SAF) form a G5 region.

It belongs to the TRAFAC class translation factor GTPase superfamily. Classic translation factor GTPase family. EF-Tu/EF-1A subfamily.

It localises to the cytoplasm. It catalyses the reaction GTP + H2O = GDP + phosphate + H(+). GTP hydrolase that promotes the GTP-dependent binding of aminoacyl-tRNA to the A-site of ribosomes during protein biosynthesis. In Methanocorpusculum labreanum (strain ATCC 43576 / DSM 4855 / Z), this protein is Elongation factor 1-alpha.